We begin with the raw amino-acid sequence, 105 residues long: Nucleoid-associated protein cu1912 (105 aa).

Belongs to the YbaB/EbfC family. In terms of assembly, homodimer.

The protein localises to the cytoplasm. Its subcellular location is the nucleoid. In terms of biological role, binds to DNA and alters its conformation. May be involved in regulation of gene expression, nucleoid organization and DNA protection. The protein is Nucleoid-associated protein cu1912 of Corynebacterium urealyticum (strain ATCC 43042 / DSM 7109).